Here is a 716-residue protein sequence, read N- to C-terminus: Penicillin-binding protein 2A (716 aa).

Residues 22 to 42 (LNILFLAAFVIFTWIIVELGI) traverse the membrane as a helical segment. Residue S397 is the Acyl-ester intermediate of the active site. Residues 689-706 (SKQDKEGTQQKNKDKIEE) show a composition bias toward basic and acidic residues. A disordered region spans residues 689-716 (SKQDKEGTQQKNKDKIEENAENTTSSDN).

It belongs to the transpeptidase family.

The protein localises to the cell membrane. It is found in the forespore inner membrane. The catalysed reaction is Preferential cleavage: (Ac)2-L-Lys-D-Ala-|-D-Ala. Also transpeptidation of peptidyl-alanyl moieties that are N-acyl substituents of D-alanine.. The protein operates within cell wall biogenesis; peptidoglycan biosynthesis. Involved in the synthesis of peptidoglycan associated with cell wall elongation, especially following spore germination. Has a partially redundant function with PBP 1 (ponA) or PBP 4 (pbpD) during spore outgrowth. Plays a redundant role with PbpH in determining the rod shape of the cell during vegetative growth and spore outgrowth. The chain is Penicillin-binding protein 2A from Bacillus subtilis (strain 168).